The sequence spans 367 residues: Mitogen-activated protein kinase 12 (367 aa).

One can recognise a Protein kinase domain in the interval 27–311; the sequence is YQDLQPVGSG…AAEALAHPYF (285 aa). ATP-binding positions include 33-41 and lysine 56; that span reads VGSGAYGAV. Aspartate 153 (proton acceptor) is an active-site residue. Threonine 183 is modified (phosphothreonine; by MAP2K3 and MAP2K6). Positions 183–185 match the TXY motif; that stretch reads TGY. Tyrosine 185 carries the post-translational modification Phosphotyrosine; by MAP2K3 and MAP2K6.

This sequence belongs to the protein kinase superfamily. CMGC Ser/Thr protein kinase family. MAP kinase subfamily. Monomer. Interacts with the PDZ domain of the syntrophin SNTA1. Interacts with LIN7C, SCRIB, SYNJ2BP and SH3BP5. Interacts with PTPN4; this interaction induces the activation of PTPN4 phosphatase activity. It depends on Mg(2+) as a cofactor. Post-translationally, dually phosphorylated on Thr-183 and Tyr-185 by MAP2K3/MKK3 and MAP2K6/MKK6, which activates the enzyme. In terms of processing, ubiquitinated. Ubiquitination leads to degradation by the proteasome pathway. Highly expressed in skeletal muscle, lung and testes and also in the heart and thymus of both adult and neonatal rats.

Its subcellular location is the cytoplasm. It is found in the nucleus. The protein resides in the mitochondrion. The enzyme catalyses L-seryl-[protein] + ATP = O-phospho-L-seryl-[protein] + ADP + H(+). The catalysed reaction is L-threonyl-[protein] + ATP = O-phospho-L-threonyl-[protein] + ADP + H(+). Its activity is regulated as follows. Activated by phosphorylation on threonine and tyrosine. MAP2K3/MKK3 and MAP2K6/MKK6 are both essential for the activation of MAPK12 induced by environmental stress, whereas MAP2K6/MKK6 is the major MAPK12 activator in response to TNF-alpha. In terms of biological role, serine/threonine kinase which acts as an essential component of the MAP kinase signal transduction pathway. MAPK12 is one of the four p38 MAPKs which play an important role in the cascades of cellular responses evoked by extracellular stimuli such as pro-inflammatory cytokines or physical stress leading to direct activation of transcription factors such as ELK1 and ATF2. Accordingly, p38 MAPKs phosphorylate a broad range of proteins and it has been estimated that they may have approximately 200 to 300 substrates each. Some of the targets are downstream kinases such as MAPKAPK2, which are activated through phosphorylation and further phosphorylate additional targets. Plays a role in myoblast differentiation and also in the down-regulation of cyclin D1 in response to hypoxia in adrenal cells suggesting MAPK12 may inhibit cell proliferation while promoting differentiation. Phosphorylates DLG1. Following osmotic shock, MAPK12 in the cell nucleus increases its association with nuclear DLG1, thereby causing dissociation of DLG1-SFPQ complexes. This function is independent of its catalytic activity and could affect mRNA processing and/or gene transcription to aid cell adaptation to osmolarity changes in the environment. Regulates UV-induced checkpoint signaling and repair of UV-induced DNA damage and G2 arrest after gamma-radiation exposure. MAPK12 is involved in the regulation of SLC2A1 expression and basal glucose uptake in L6 myotubes; and negatively regulates SLC2A4 expression and contraction-mediated glucose uptake in adult skeletal muscle. C-Jun (JUN) phosphorylation is stimulated by MAPK14 and inhibited by MAPK12, leading to a distinct AP-1 regulation. MAPK12 is required for the normal kinetochore localization of PLK1, prevents chromosomal instability and supports mitotic cell viability. MAPK12-signaling is also positively regulating the expansion of transient amplifying myogenic precursor cells during muscle growth and regeneration. This is Mitogen-activated protein kinase 12 (Mapk12) from Rattus norvegicus (Rat).